The primary structure comprises 802 residues: Osmosensitive cation channel TMEM63C (802 aa).

Topologically, residues 1 to 35 are extracellular; sequence MTASPESMGQKFRNMTANECFQSRSTVLQGQPFGG. The chain crosses the membrane as a helical span at residues 36–60; sequence IPTVLLLNIILWVCVVLVYSFLRKA. Residues 61–124 are Cytoplasmic-facing; it reads AWDYGRLALL…RDRDLINKCG (64 aa). Phosphoserine occurs at positions 75 and 78. The helical transmembrane segment at 125-157 threads the bilayer; sequence EDARIYIMFQYHLIIFVLILCIPSLGIILPVNY. Over 158–180 the chain is Extracellular; the sequence is IGSALDWSSHFGRTTIVNVSTES. Residues 181–205 form a helical membrane-spanning segment; sequence QFLWLHSIFAFMYFLTNFAFMGHHC. The Cytoplasmic segment spans residues 206–401; that stretch reads LGFVPKKNLH…IIWKHLSIRR (196 aa). The chain crosses the membrane as a helical span at residues 402-431; sequence FSWWARFIAINTSLFFLFFFLTTPAIIINT. At 432–446 the chain is on the extracellular side; sequence IDMYNVTRPIEKLQS. A helical transmembrane segment spans residues 447–476; the sequence is PVVTQFFPSVLLWAFTVIMPLLVYFSAFLE. Topologically, residues 477-480 are cytoplasmic; sequence AHWT. A helical transmembrane segment spans residues 481–517; it reads RSNQNLIIMYKCYIFLVFMVVILPSMGLTSLDVFLRW. Residues 518–540 are Extracellular-facing; it reads LFDIYYLEHATIRFQCVFLPDNG. Residues 541 to 573 form a helical membrane-spanning segment; it reads AFFINYVITSALFGTGMELMRLGSLCTYCTRLF. Residues 574-593 are Cytoplasmic-facing; that stretch reads LSRSEPERVHIRKNLAMDFQ. A helical membrane pass occupies residues 594–612; sequence FGREYAWMLNVFSVVMAYS. Topologically, residues 613–615 are extracellular; sequence ITC. The chain crosses the membrane as a helical span at residues 616–640; sequence PIIVPFGLLYLCMKHITDRYNMYYS. At 641–647 the chain is on the cytoplasmic side; that stretch reads YAPTKLN. Residues 648–676 traverse the membrane as a helical segment; sequence AQIHMAAVYQAIFAPLLGLFWMLFFSILR. The Extracellular portion of the chain corresponds to 677–681; sequence VGSLH. A helical transmembrane segment spans residues 682 to 702; it reads SITLFSLSSIIISVIIAFSGV. Residues 703–802 lie on the Cytoplasmic side of the membrane; the sequence is FLGKFRIAQQ…EGLELEGQSH (100 aa). Residues 753–785 form a disordered region; it reads TPASSPARHTYGTMNSQPEEGEEESGLRGFARE.

Belongs to the CSC1 (TC 1.A.17) family. In terms of assembly, monomer. In terms of tissue distribution, expressed in podocytes of kidney glomeruli.

The protein resides in the endoplasmic reticulum membrane. It is found in the cell membrane. The enzyme catalyses Ca(2+)(in) = Ca(2+)(out). Acts as an osmosensitive cation channel preferentially activated upon hypotonic stress. In contrast to TMEM63B, does not show phospholipid scramblase activity. Enriched in mitochondria-ER contact sites where it may regulate the metabolite flux and organelles' morphologies in response to osmotic changes. In particular may regulate mitochondrial motility and function in motor neuron axons. Required for the functional integrity of the kidney glomerular filtration barrier. In Rattus norvegicus (Rat), this protein is Osmosensitive cation channel TMEM63C (Tmem63c).